Here is a 435-residue protein sequence, read N- to C-terminus: Divergent protein kinase domain 2B (435 aa).

Positions Met1 to Ser33 are cleaved as a signal peptide. N-linked (GlcNAc...) asparagine glycosylation is found at Asn102 and Asn395.

The protein belongs to the DIPK family.

The protein resides in the secreted. This Mus musculus (Mouse) protein is Divergent protein kinase domain 2B (Dipk2b).